A 113-amino-acid polypeptide reads, in one-letter code: MDKKSAHRNPEDAKAGKYEGKHKRKKKRKQNQNQHRSRHRSVTSFSSDDRVFPSSSSSSSGSQTDSSTEDATQGKIKKKRREKTNKWRGKRKVSSEMSIILSGPQSLVHTICH.

Over residues 1–19 (MDKKSAHRNPEDAKAGKYE) the composition is skewed to basic and acidic residues. The disordered stretch occupies residues 1–94 (MDKKSAHRNP…NKWRGKRKVS (94 aa)). A compositionally biased stretch (basic residues) spans 20-41 (GKHKRKKKRKQNQNQHRSRHRS). Low complexity predominate over residues 52 to 66 (FPSSSSSSSGSQTDS). Residues 75–92 (KIKKKRREKTNKWRGKRK) are compositionally biased toward basic residues.

This is an uncharacterized protein from Macaca fascicularis (Crab-eating macaque).